A 103-amino-acid polypeptide reads, in one-letter code: Large ribosomal subunit protein uL24 (103 aa).

Belongs to the universal ribosomal protein uL24 family. In terms of assembly, part of the 50S ribosomal subunit.

Its function is as follows. One of two assembly initiator proteins, it binds directly to the 5'-end of the 23S rRNA, where it nucleates assembly of the 50S subunit. One of the proteins that surrounds the polypeptide exit tunnel on the outside of the subunit. The sequence is that of Large ribosomal subunit protein uL24 from Exiguobacterium sibiricum (strain DSM 17290 / CCUG 55495 / CIP 109462 / JCM 13490 / 255-15).